Reading from the N-terminus, the 31-residue chain is Cytochrome b6-f complex subunit 6 (31 aa).

The helical transmembrane segment at 4-24 threads the bilayer; it reads VISYFGFLLVALAFTLVTYLG.

This sequence belongs to the PetL family. The 4 large subunits of the cytochrome b6-f complex are cytochrome b6, subunit IV (17 kDa polypeptide, PetD), cytochrome f and the Rieske protein, while the 4 small subunits are PetG, PetL, PetM and PetN. The complex functions as a dimer.

Its subcellular location is the plastid. The protein resides in the chloroplast thylakoid membrane. In terms of biological role, component of the cytochrome b6-f complex, which mediates electron transfer between photosystem II (PSII) and photosystem I (PSI), cyclic electron flow around PSI, and state transitions. PetL is important for photoautotrophic growth as well as for electron transfer efficiency and stability of the cytochrome b6-f complex. The chain is Cytochrome b6-f complex subunit 6 from Nephroselmis olivacea (Green alga).